The following is a 261-amino-acid chain: Ribosomal RNA small subunit methyltransferase J (261 aa).

S-adenosyl-L-methionine-binding positions include 101–102, 117–118, 153–154, and D176; these read RD, ER, and SS.

The protein belongs to the methyltransferase superfamily. RsmJ family.

The protein localises to the cytoplasm. It catalyses the reaction guanosine(1516) in 16S rRNA + S-adenosyl-L-methionine = N(2)-methylguanosine(1516) in 16S rRNA + S-adenosyl-L-homocysteine + H(+). In terms of biological role, specifically methylates the guanosine in position 1516 of 16S rRNA. The chain is Ribosomal RNA small subunit methyltransferase J from Vibrio cholerae serotype O1 (strain ATCC 39315 / El Tor Inaba N16961).